The sequence spans 266 residues: Apolipoprotein A-I (266 aa).

A signal peptide spans 1 to 18 (MKAVVLTLAVLFLTGSQA). Repeat copies occupy residues 67–88 (LKLLDNWDSLSSTVAKLREQIG) and 89–110 (PVTQEFWDNLEKETEVLRQEMS). Residues 67–266 (LKLLDNWDSL…DEATKKLNSQ (200 aa)) form a 10 X approximate tandem repeats region. Met109 bears the Methionine sulfoxide mark. One copy of the 3; half-length repeat lies at 111–121 (KDLEEVKKKVQ). Repeat copies occupy residues 122 to 143 (PYLDEFQSKWHEEVELYRQKVA), 144 to 165 (PLGAELREGARQKLQELQEKLS), 166 to 187 (PLAEELRDRARAHVDALRAQLA), 188 to 209 (PYSEQLRERLAARLQALKEGGG), and 210 to 231 (AALTEYHAKASEHLSALREKAK). Residues 232 to 242 (PALEDLRQGLL) form a 9; half-length repeat. Copy 10 of the repeat occupies 243-266 (PVLENFRVSLLAAVDEATKKLNSQ).

Belongs to the apolipoprotein A1/A4/E family. In terms of assembly, homodimer. Interacts with APOA1BP and CLU. Component of a sperm activating protein complex (SPAP), consisting of APOA1, an immunoglobulin heavy chain, an immunoglobulin light chain and albumin. Interacts with NDRG1. Interacts with SCGB3A2. Interacts with NAXE and YJEFN3. In terms of processing, glycosylated. Palmitoylated. Post-translationally, phosphorylation sites are present in the extracellular medium.

The protein resides in the secreted. In terms of biological role, participates in the reverse transport of cholesterol from tissues to the liver for excretion by promoting cholesterol efflux from tissues and by acting as a cofactor for the lecithin cholesterol acyltransferase (LCAT). As part of the SPAP complex, activates spermatozoa motility. This Mirounga angustirostris (Northern elephant seal) protein is Apolipoprotein A-I (APOA1).